We begin with the raw amino-acid sequence, 125 residues long: Large ribosomal subunit protein bL20 (125 aa).

It belongs to the bacterial ribosomal protein bL20 family.

Binds directly to 23S ribosomal RNA and is necessary for the in vitro assembly process of the 50S ribosomal subunit. It is not involved in the protein synthesizing functions of that subunit. The sequence is that of Large ribosomal subunit protein bL20 from Rhizorhabdus wittichii (strain DSM 6014 / CCUG 31198 / JCM 15750 / NBRC 105917 / EY 4224 / RW1) (Sphingomonas wittichii).